An 838-amino-acid chain; its full sequence is MYAFYSLLIYIFYSLFRRDGGAAAAAEPGDPAQRARKPRGRRRPDLPAPELWTELTGLAASSEPEDGSEGAAEGRAAAVSLEEALLRLAEFLSVQLGAEESCGGPADLGQSGEVPSLLTVTSQLLALLAWLRSPRGRQALLQGTQPAPRVRPPSPDGSTSQEESPSHFTAVPGEPLGDETQGQQPLQLEEDQRAWQRLEQLILGQLEELKQQLEQQEEELGRLRLGVGATDSEKRVQHLTLENEALKQSLSLMRDLLLHWGPGPPIRAPQEEAEALLELQGRLQEAQDTTEALRAQLGVQEVQLQGLQGALQQLQQETEQNCRRELQQMHGQLAGLRARMASLRQGCGDLRGLVSTFTQSCQGSLSEARGQVSWALGALSSGGPGTQLPEGQQGPPAGCPGRLPELKGNIRVLCRLRPGTSSSLVSVEPGPGGTVTTCYRGRHRRFRLDWVFPPDASQEEVFRELEPAVLSCLRGYSVCIFTYGQTGTGKTYSMEGPPEDPGIVPRALQSLFREMGAGRQHRVTLSMVEIYNEAVRDLLAPGPPERLAVRQGPEGQGGIQVAGLTHWDVPNLETLHQMLKLGRSNRATAATAMNQRSSRSHALVTLTLRAASPPRAPGTAGTLHLVDLAGSERARKAGAAGPPRGDPDGARRLREAQTINRSLLALGGVMAALRAHRPHVPFRDSQLTRLLQPALGPGTTAVLLLQVGAGAGQVCACRSPPTRARPPAPLARRSPRGRRISGRQSAPSSSPTEWVKWSWGQPGAAGSRAPPGRLLPSAPTLRSPGPPAPLRRPLAVLHAPVPTTARARLSRPQRACPSSPGSRPCPWGLRPGLCWQRR.

Over residues 23–32 (AAAAEPGDPA) the composition is skewed to low complexity. Disordered regions lie at residues 23–48 (AAAA…DLPA) and 140–185 (LLQG…GQQP). Residues 156–167 (DGSTSQEESPSH) show a composition bias toward polar residues. The stretch at 186–351 (LQLEEDQRAW…SLRQGCGDLR (166 aa)) forms a coiled coil. Residues 409–740 (NIRVLCRLRP…ARRSPRGRRI (332 aa)) form the Kinesin motor domain. 484-491 (GQTGTGKT) serves as a coordination point for ATP. The segment at 718–792 (RSPPTRARPP…SPGPPAPLRR (75 aa)) is disordered.

Belongs to the TRAFAC class myosin-kinesin ATPase superfamily. Kinesin family.

Its subcellular location is the cytoplasm. The protein resides in the cytoskeleton. In terms of biological role, may play a role in microtubule-dependent retrograde axonal transport. May function as the motor for the transport of multivesicular body (MVB)-like organelles in dendrites. The protein is Kinesin-like protein KIFC2 (KIFC2) of Homo sapiens (Human).